A 451-amino-acid polypeptide reads, in one-letter code: Bifunctional protein GlmU (451 aa).

A pyrophosphorylase region spans residues 1-232; it reads MTARSSLTIV…EDEVRGINTK (232 aa). UDP-N-acetyl-alpha-D-glucosamine is bound by residues 11 to 14, lysine 25, glutamine 78, and 83 to 84; these read LAAG and GT. Aspartate 108 contributes to the Mg(2+) binding site. UDP-N-acetyl-alpha-D-glucosamine contacts are provided by glycine 144, glutamate 158, asparagine 173, and asparagine 230. Asparagine 230 provides a ligand contact to Mg(2+). The tract at residues 233-253 is linker; that stretch reads AQLAEAESVMQARLRKAAMEA. An N-acetyltransferase region spans residues 254 to 451; sequence GVTLIAPETV…MKTRGKKPEK (198 aa). 2 residues coordinate UDP-N-acetyl-alpha-D-glucosamine: arginine 319 and lysine 337. Catalysis depends on histidine 349, which acts as the Proton acceptor. UDP-N-acetyl-alpha-D-glucosamine is bound by residues tyrosine 352 and asparagine 363. Residues alanine 366, 372–373, serine 409, and arginine 426 each bind acetyl-CoA; that span reads NY.

This sequence in the N-terminal section; belongs to the N-acetylglucosamine-1-phosphate uridyltransferase family. In the C-terminal section; belongs to the transferase hexapeptide repeat family. In terms of assembly, homotrimer. It depends on Mg(2+) as a cofactor.

The protein localises to the cytoplasm. The catalysed reaction is alpha-D-glucosamine 1-phosphate + acetyl-CoA = N-acetyl-alpha-D-glucosamine 1-phosphate + CoA + H(+). It catalyses the reaction N-acetyl-alpha-D-glucosamine 1-phosphate + UTP + H(+) = UDP-N-acetyl-alpha-D-glucosamine + diphosphate. It participates in nucleotide-sugar biosynthesis; UDP-N-acetyl-alpha-D-glucosamine biosynthesis; N-acetyl-alpha-D-glucosamine 1-phosphate from alpha-D-glucosamine 6-phosphate (route II): step 2/2. Its pathway is nucleotide-sugar biosynthesis; UDP-N-acetyl-alpha-D-glucosamine biosynthesis; UDP-N-acetyl-alpha-D-glucosamine from N-acetyl-alpha-D-glucosamine 1-phosphate: step 1/1. The protein operates within bacterial outer membrane biogenesis; LPS lipid A biosynthesis. In terms of biological role, catalyzes the last two sequential reactions in the de novo biosynthetic pathway for UDP-N-acetylglucosamine (UDP-GlcNAc). The C-terminal domain catalyzes the transfer of acetyl group from acetyl coenzyme A to glucosamine-1-phosphate (GlcN-1-P) to produce N-acetylglucosamine-1-phosphate (GlcNAc-1-P), which is converted into UDP-GlcNAc by the transfer of uridine 5-monophosphate (from uridine 5-triphosphate), a reaction catalyzed by the N-terminal domain. This chain is Bifunctional protein GlmU, found in Bradyrhizobium diazoefficiens (strain JCM 10833 / BCRC 13528 / IAM 13628 / NBRC 14792 / USDA 110).